The sequence spans 198 residues: Probable GTP-binding protein EngB (198 aa).

Residues 22-195 (DLPEIALAGR…WKAIHKMTKT (174 aa)) form the EngB-type G domain. GTP contacts are provided by residues 30 to 37 (GRSNVGKS), 57 to 61 (GKTQT), 75 to 78 (DVPG), 142 to 145 (TKAD), and 174 to 176 (FSS). Mg(2+) is bound by residues serine 37 and threonine 59.

The protein belongs to the TRAFAC class TrmE-Era-EngA-EngB-Septin-like GTPase superfamily. EngB GTPase family. Mg(2+) serves as cofactor.

Its function is as follows. Necessary for normal cell division and for the maintenance of normal septation. The chain is Probable GTP-binding protein EngB from Bacillus cereus (strain G9842).